Here is a 327-residue protein sequence, read N- to C-terminus: Delta-aminolevulinic acid dehydratase (327 aa).

Residues Cys-119, Cys-121, and Cys-129 each contribute to the Zn(2+) site. The Schiff-base intermediate with substrate role is filled by Lys-198. 5-aminolevulinate is bound by residues Arg-208 and Arg-220. Residue Glu-236 participates in Mg(2+) binding. The active-site Schiff-base intermediate with substrate is Lys-251. Residues Ser-277 and Tyr-316 each coordinate 5-aminolevulinate.

Belongs to the ALAD family. Homooctamer. Zn(2+) is required as a cofactor.

The enzyme catalyses 2 5-aminolevulinate = porphobilinogen + 2 H2O + H(+). It participates in porphyrin-containing compound metabolism; protoporphyrin-IX biosynthesis; coproporphyrinogen-III from 5-aminolevulinate: step 1/4. Catalyzes an early step in the biosynthesis of tetrapyrroles. Binds two molecules of 5-aminolevulinate per subunit, each at a distinct site, and catalyzes their condensation to form porphobilinogen. The polypeptide is Delta-aminolevulinic acid dehydratase (hemB) (Synechocystis sp. (strain ATCC 27184 / PCC 6803 / Kazusa)).